The sequence spans 406 residues: Probable tRNA sulfurtransferase (406 aa).

The THUMP domain maps to 62-167; it reads AEVSNRLTKV…QDATYLSFED (106 aa). Residues 185-186, 210-211, arginine 267, glycine 289, and glutamine 298 each bind ATP; these read ML and HF.

The protein belongs to the ThiI family.

The protein localises to the cytoplasm. It carries out the reaction [ThiI sulfur-carrier protein]-S-sulfanyl-L-cysteine + a uridine in tRNA + 2 reduced [2Fe-2S]-[ferredoxin] + ATP + H(+) = [ThiI sulfur-carrier protein]-L-cysteine + a 4-thiouridine in tRNA + 2 oxidized [2Fe-2S]-[ferredoxin] + AMP + diphosphate. The catalysed reaction is [ThiS sulfur-carrier protein]-C-terminal Gly-Gly-AMP + S-sulfanyl-L-cysteinyl-[cysteine desulfurase] + AH2 = [ThiS sulfur-carrier protein]-C-terminal-Gly-aminoethanethioate + L-cysteinyl-[cysteine desulfurase] + A + AMP + 2 H(+). Its pathway is cofactor biosynthesis; thiamine diphosphate biosynthesis. Catalyzes the ATP-dependent transfer of a sulfur to tRNA to produce 4-thiouridine in position 8 of tRNAs, which functions as a near-UV photosensor. Also catalyzes the transfer of sulfur to the sulfur carrier protein ThiS, forming ThiS-thiocarboxylate. This is a step in the synthesis of thiazole, in the thiamine biosynthesis pathway. The sulfur is donated as persulfide by IscS. The sequence is that of Probable tRNA sulfurtransferase from Lactococcus lactis subsp. cremoris (strain MG1363).